Consider the following 63-residue polypeptide: MSRVCDICGKKPTTGNNVSHAHNKTRKVWYPNLQKVRALHKGKVQAIKVCTRCLRSGAVTKAI.

The protein belongs to the bacterial ribosomal protein bL28 family.

The polypeptide is Large ribosomal subunit protein bL28 (Syntrophotalea carbinolica (strain DSM 2380 / NBRC 103641 / GraBd1) (Pelobacter carbinolicus)).